The primary structure comprises 477 residues: Aryl-phospho-beta-D-glucosidase BglC (477 aa).

Catalysis depends on E170, which acts as the Proton donor. E378 (nucleophile) is an active-site residue.

This sequence belongs to the glycosyl hydrolase 1 family.

The catalysed reaction is 6-phospho-beta-D-glucosyl-(1-&gt;4)-D-glucose + H2O = D-glucose 6-phosphate + D-glucose. Functionally, is able to catalyze the hydrolysis of aryl-phospho-beta-D-glucosides such as 4-methylumbelliferyl-phospho-beta-D-glucopyranoside (MUG-P), phosphoarbutin and phosphosalicin. Is not essential for growth on arbutin and salicin as the sole carbon source. The protein is Aryl-phospho-beta-D-glucosidase BglC (bglC) of Bacillus subtilis (strain 168).